A 760-amino-acid chain; its full sequence is Leucine-rich repeat extensin-like protein 3 (760 aa).

Positions 1–20 (MKKTIQILLFFFFLINLTNA) are cleaved as a signal peptide. N-linked (GlcNAc...) asparagine glycosylation occurs at Asn16. The LRR 1 repeat unit spans residues 21 to 45 (LSISSDGGVLSDNEVRHIQRRQLLE). N-linked (GlcNAc...) asparagine glycosylation is found at Asn86 and Asn98. 9 LRR repeats span residues 113–137 (IRTV…LGLL), 138–160 (SDLA…RFNR), 161–185 (LKLL…VLQL), 186–209 (PSLK…LFSK), 211–232 (LDAI…FGDS), 234–255 (VSVI…LVEM), 256–279 (KNLN…IGRL), 281–303 (NVTV…VGEM), and 304–327 (VSVE…ICQL). An N-linked (GlcNAc...) asparagine glycan is attached at Asn281. The N-linked (GlcNAc...) asparagine glycan is linked to Asn332. Disordered regions lie at residues 389-502 (GRSV…PPPP), 515-610 (PPVY…YSPP), and 663-748 (PPPP…PVIG). Composition is skewed to pro residues over residues 394–415 (PRPP…PPAP) and 423–502 (LTSP…PPPP). Residues 409 to 758 (SPPPPAPIFS…VSYASPPPPP (350 aa)) form a contains the Ser-Pro(4) repeats region. Pro residues predominate over residues 663–745 (PPPPVHYSSP…SPEYEGPLPP (83 aa)).

As to quaternary structure, interacts with SH3P1. Post-translationally, hydroxylated on proline residues in the S-P-P-P-P repeat. O-glycosylated on hydroxyprolines. In terms of tissue distribution, expressed in roots, stems, leaves and flowers, mostly in vascular tissues.

It localises to the secreted. The protein localises to the cell wall. Functionally, modulates cell morphogenesis by regulating cell wall formation and assembly, and/or growth polarization. The protein is Leucine-rich repeat extensin-like protein 3 (LRX3) of Arabidopsis thaliana (Mouse-ear cress).